The chain runs to 333 residues: T-cell surface glycoprotein CD1b-2 (333 aa).

The first 20 residues, 1–20 (MLLLPLLLLGVILPGGDNED), serve as a signal peptide directing secretion. Residues 21 to 302 (VFQGPTSFHL…LYWGHPTSIG (282 aa)) are Extracellular-facing. 3 N-linked (GlcNAc...) asparagine glycosylation sites follow: Asn-38, Asn-75, and Asn-146. Cystine bridges form between Cys-120–Cys-184, Cys-149–Cys-163, and Cys-224–Cys-279. The region spanning 185 to 295 (PRYLLGVLDA…LGDQDIILYW (111 aa)) is the Ig-like domain. The chain crosses the membrane as a helical span at residues 303–323 (LILVAIIVPSLILSICLALWF). Over 324-333 (WRRWSYQNIL) the chain is Cytoplasmic. The Internalization signal motif lies at 329–332 (YQNI).

Heterodimer with B2M (beta-2-microglobulin). Interacts with saposin C.

The protein localises to the cell membrane. Its subcellular location is the endosome membrane. It is found in the lysosome membrane. Functionally, antigen-presenting protein that binds self and non-self lipid and glycolipid antigens and presents them to T-cell receptors on natural killer T-cells. This Ovis aries (Sheep) protein is T-cell surface glycoprotein CD1b-2.